Consider the following 160-residue polypeptide: Putative pre-16S rRNA nuclease (160 aa).

It belongs to the YqgF nuclease family.

The protein resides in the cytoplasm. In terms of biological role, could be a nuclease involved in processing of the 5'-end of pre-16S rRNA. In Chelativorans sp. (strain BNC1), this protein is Putative pre-16S rRNA nuclease.